Here is a 394-residue protein sequence, read N- to C-terminus: MRAQTLPAGSDHAPVLACGAWLKNAACLLRGAEVLWSPIHGDLGDPANCDALDQSVEQLLDSAHGQVQAVAHDLHPDFYSTQLAQRLAARLCVPAVAVQHHHAHIAALMAEYDLREPVIGLALDGVGLGTDGTAWGGELLWVSPSEWCRLGHLQSLPLPGGDVAAREPWRMAAAALHVLDRTGEIGRRYGAVVGEQAARTVAAMLERQLNCPRSSSAGRWFDAAAGALGVSVRQQAEAQAAIALEALAADYLSALSPPECVGTYVVDQDGVLDLRGLLEQLFALADEGQAGQAARGAALFHVALAEALVGWAADAAQGHGLKTVALGGGCFMNGILSASVQAGLAARGLQALLPRAVSCGDAGLALGQAWVAARQPTAALAPQTHLQEEGAPCA.

It belongs to the carbamoyltransferase HypF family.

In Cupriavidus necator (strain ATCC 17699 / DSM 428 / KCTC 22496 / NCIMB 10442 / H16 / Stanier 337) (Ralstonia eutropha), this protein is Carbamoyltransferase HypF homolog (hypF1).